Consider the following 847-residue polypeptide: MVDAITEFVVGKIDNYLIEEAPMLIGVKDDLEELKTELTCIQVYLKNVEVCDKEDEVSKEWTKLVLDIAYDVEDVLDTYFLKLEKRLHRLGLMRLTNIISDKKDAYNILDDIKTLKRRTLDVTRKLEMYGIGNFNEHRVVASTSRVREVRRARSDDQEERVVGLTDDAKVLLTKLLDDDGDNKIYMISIFGMEGLGKTSLARKLFNSSDVKESFEYRVWTNVSGECNTRDILMRIISSLEETSEGELEKMAQQELEVYLHDILQEKRYLVVVDDIWESEALESLKRALPCSYQGSRVIITTSIRVVAEGRDKRVYTHNIRFLTFKESWNLFEKKAFRYILKVDQELQKIGKEMVQKCGGLPRTTVVLAGLMSRKKPNEWNDVWSSLRVKDDNIHVSSLFDLSFKDMGHELKLCFLYLSVFPEDYEVDVEKLIQLLVAEGFIQEDEEMTMEDVARYYIEDLVYISLVEVVKRKKGKLMSFRIHDLVREFTIKKSKELNFVNVYDEQHSSTTSRREVVHHLMDDNYLCDRRVNTQMRSFLFFGKRRNDITYVETITLKLKLLRVLNLGGLHFICQGYSPWSLPDVIGGLVHLRYLGIADTVVNNLPDFISNLRFLQTLDASGNSFERMTDLSNLTSLRHLTGRFIGELLIGDAVNLQTLRSISSYSWSKLKHELLINLRDLEIYEFHILNDQIKVPLDLVSLSKLKNLRVLKIEVVSFSLFSEETVRFELLVKLTLHCDVRRLPRDMDLIFPSLESLTLVTNLQEDPMPTLQKLQRLENLVLYSCVYPGAKMFINAQGFGRLRKLKVIIKRLDELEIEEEAMPCLMKLNLDNKDGATKLMIPDRMRAFV.

Residues 26–42 (GVKDDLEELKTELTCIQ) adopt a coiled-coil conformation. Positions 142 to 446 (STSRVREVRR…AEGFIQEDEE (305 aa)) constitute an NB-ARC domain. 191 to 198 (GMEGLGKT) is a binding site for ATP. 5 LRR repeats span residues 587 to 610 (LVHL…ISNL), 612 to 634 (FLQT…NLTS), 703 to 726 (LKNL…TVRF), 749 to 774 (FPSL…KLQR), and 807 to 830 (IKRL…NLDN).

Belongs to the disease resistance NB-LRR family. RPP13 subfamily.

Its function is as follows. Potential disease resistance protein. This chain is Putative disease resistance RPP13-like protein 2 (RPP13L2), found in Arabidopsis thaliana (Mouse-ear cress).